A 455-amino-acid polypeptide reads, in one-letter code: Bifunctional protein GlmU (455 aa).

The interval methionine 1 to proline 228 is pyrophosphorylase. Residues leucine 10–glycine 13, lysine 24, glutamine 76, glycine 81–threonine 82, tyrosine 103–aspartate 105, glycine 138, glutamate 153, asparagine 168, and asparagine 226 contribute to the UDP-N-acetyl-alpha-D-glucosamine site. Aspartate 105 contacts Mg(2+). Position 226 (asparagine 226) interacts with Mg(2+). The segment at tryptophan 229–glutamine 249 is linker. The tract at residues glycine 250–serine 455 is N-acetyltransferase. UDP-N-acetyl-alpha-D-glucosamine is bound by residues arginine 332 and lysine 350. Histidine 362 acts as the Proton acceptor in catalysis. 2 residues coordinate UDP-N-acetyl-alpha-D-glucosamine: tyrosine 365 and asparagine 376. Acetyl-CoA-binding positions include alanine 379, asparagine 385 to tyrosine 386, serine 404, alanine 422, and arginine 439.

This sequence in the N-terminal section; belongs to the N-acetylglucosamine-1-phosphate uridyltransferase family. The protein in the C-terminal section; belongs to the transferase hexapeptide repeat family. In terms of assembly, homotrimer. It depends on Mg(2+) as a cofactor.

It is found in the cytoplasm. The enzyme catalyses alpha-D-glucosamine 1-phosphate + acetyl-CoA = N-acetyl-alpha-D-glucosamine 1-phosphate + CoA + H(+). It catalyses the reaction N-acetyl-alpha-D-glucosamine 1-phosphate + UTP + H(+) = UDP-N-acetyl-alpha-D-glucosamine + diphosphate. It participates in nucleotide-sugar biosynthesis; UDP-N-acetyl-alpha-D-glucosamine biosynthesis; N-acetyl-alpha-D-glucosamine 1-phosphate from alpha-D-glucosamine 6-phosphate (route II): step 2/2. Its pathway is nucleotide-sugar biosynthesis; UDP-N-acetyl-alpha-D-glucosamine biosynthesis; UDP-N-acetyl-alpha-D-glucosamine from N-acetyl-alpha-D-glucosamine 1-phosphate: step 1/1. It functions in the pathway bacterial outer membrane biogenesis; LPS lipid A biosynthesis. Its function is as follows. Catalyzes the last two sequential reactions in the de novo biosynthetic pathway for UDP-N-acetylglucosamine (UDP-GlcNAc). The C-terminal domain catalyzes the transfer of acetyl group from acetyl coenzyme A to glucosamine-1-phosphate (GlcN-1-P) to produce N-acetylglucosamine-1-phosphate (GlcNAc-1-P), which is converted into UDP-GlcNAc by the transfer of uridine 5-monophosphate (from uridine 5-triphosphate), a reaction catalyzed by the N-terminal domain. The polypeptide is Bifunctional protein GlmU (Stenotrophomonas maltophilia (strain R551-3)).